A 134-amino-acid polypeptide reads, in one-letter code: Profilin (134 aa).

This sequence belongs to the profilin family. Occurs in many kinds of cells as a complex with monomeric actin in a 1:1 ratio.

It is found in the cytoplasm. The protein localises to the cytoskeleton. Its function is as follows. Binds to actin and affects the structure of the cytoskeleton. At high concentrations, profilin prevents the polymerization of actin, whereas it enhances it at low concentrations. By binding to PIP2, it inhibits the formation of IP3 and DG. The chain is Profilin from Apium graveolens (Celery).